Reading from the N-terminus, the 704-residue chain is Elongation factor G (704 aa).

The tr-type G domain maps to 9 to 285; it reads AKVRNIGIMA…AIVAYLPSPL (277 aa). GTP-binding positions include 18-25, 82-86, and 136-139; these read AHIDAGKT, DTPGH, and NKMD.

The protein belongs to the TRAFAC class translation factor GTPase superfamily. Classic translation factor GTPase family. EF-G/EF-2 subfamily.

Its subcellular location is the cytoplasm. Functionally, catalyzes the GTP-dependent ribosomal translocation step during translation elongation. During this step, the ribosome changes from the pre-translocational (PRE) to the post-translocational (POST) state as the newly formed A-site-bound peptidyl-tRNA and P-site-bound deacylated tRNA move to the P and E sites, respectively. Catalyzes the coordinated movement of the two tRNA molecules, the mRNA and conformational changes in the ribosome. This Thermobifida fusca (strain YX) protein is Elongation factor G.